A 702-amino-acid polypeptide reads, in one-letter code: Putative endo-beta-N-acetylglucosaminidase (702 aa).

Residues 1–23 (MKKVRFIFLALLFFLASPEGAMA) form the signal peptide. Cell wall-binding repeat units follow at residues 42-63 (ANEW…DANY), 65-84 (ENEW…GGYM), 86-105 (KSEW…DGKM), 124-145 (IEDW…DGQH), 147-166 (EKEW…GGYL), 185-206 (QQGW…NGNY), 208-227 (DKEW…GGYM), 229-248 (ANEW…DGKI), 250-271 (EKEW…GGYM), 273-292 (ANEW…DGKM), 294-315 (EKEW…GGYM), 317-336 (ANEW…DGKI), 338-359 (EKEW…GGYM), 361-380 (ANEW…DGKM), and 382-403 (EKEW…GGYM).

Belongs to the glycosyl hydrolase 73 family.

It is found in the secreted. It catalyses the reaction an N(4)-(oligosaccharide-(1-&gt;3)-[oligosaccharide-(1-&gt;6)]-beta-D-Man-(1-&gt;4)-beta-D-GlcNAc-(1-&gt;4)-alpha-D-GlcNAc)-L-asparaginyl-[protein] + H2O = an oligosaccharide-(1-&gt;3)-[oligosaccharide-(1-&gt;6)]-beta-D-Man-(1-&gt;4)-D-GlcNAc + N(4)-(N-acetyl-beta-D-glucosaminyl)-L-asparaginyl-[protein]. Functionally, plays an important role in cell wall degradation and cell separation. The protein is Putative endo-beta-N-acetylglucosaminidase (lytB) of Streptococcus pneumoniae (strain ATCC BAA-255 / R6).